The following is a 458-amino-acid chain: Retinoic acid receptor alpha (458 aa).

Residues 1–87 (MSSKDNTCPP…PPPLPRIYKP (87 aa)) form a modulating region. The interval 39-78 (GGLPGVQHQPPLSGYSTPSPATIETQSTSSEEIVPSPPTP) is disordered. The span at 52–69 (GYSTPSPATIETQSTSSE) shows a compositional bias: polar residues. NR C4-type zinc fingers lie at residues 88 to 108 (CFVC…CEGC) and 124 to 148 (CHRD…LQKC). The segment at residues 88–153 (CFVCQDKSSG…RLQKCFEVGM (66 aa)) is a DNA-binding region (nuclear receptor). The tract at residues 154–182 (SKESVRNDRNKKKKESPKPEAIESYILSP) is hinge. Residues 183–417 (ETQDLIEKVQ…LIQEMLENSE (235 aa)) enclose the NR LBD domain. A 9aaTAD motif is present at residues 407-415 (PLIQEMLEN). The segment at 419–458 (LDTLGGGASSDAPVTPVAPGSCSPSLSPSSTHSSPSTHSP) is disordered. Residues 439 to 458 (SCSPSLSPSSTHSSPSTHSP) are compositionally biased toward low complexity.

It belongs to the nuclear hormone receptor family. NR1 subfamily. In terms of assembly, heterodimer; with an rxr molecule. Binds DNA preferentially as a rar/rxr heterodimer.

Its subcellular location is the nucleus. Receptor for retinoic acid. Retinoic acid receptors bind as heterodimers to their target response elements in response to their ligands, all-trans or 9-cis retinoic acid, and regulate gene expression in various biological processes. The rar/rxr heterodimers bind to the retinoic acid response elements (RARE) composed of tandem 5'-AGGTCA-3' sites known as DR1-DR5. Required for primary neurogenesis and for anteroposterior neural patterning. The polypeptide is Retinoic acid receptor alpha (rara) (Xenopus laevis (African clawed frog)).